The primary structure comprises 250 residues: Golgi SNAP receptor complex member 1 (250 aa).

N-acetylalanine is present on alanine 2. The Cytoplasmic portion of the chain corresponds to 2-229; sequence AAGTSNYWED…QRINLRKRRD (228 aa). A coiled-coil region spans residues 10 to 30; that stretch reads EDLRKQARQLENELDLKLVSF. A disordered region spans residues 39 to 59; it reads HSSARDGRRDRYSSDTTPLLN. Over residues 41–51 the composition is skewed to basic and acidic residues; it reads SARDGRRDRYS. Positions 70-93 form a coiled coil; the sequence is MAIEIEQLLARLTGINDKMAEYTS. Phosphoserine is present on serine 141. The chain crosses the membrane as a helical; Anchor for type IV membrane protein span at residues 230–250; that stretch reads SLILGGVIGVCTILLLLYAFH.

This sequence belongs to the GOSR1 family. Component of several multiprotein Golgi SNARE complexes. Identified in a SNARE complex with BET1, STX5 and YKT6, in a SNARE complex with BET1L, STX5 and YKT6, in a SNARE complex with STX5, GOSR2, SEC22B and BET1, and in complex with STX5 and COG3. Interacts with GABARAPL2.

Its subcellular location is the golgi apparatus membrane. Involved in transport from the ER to the Golgi apparatus as well as in intra-Golgi transport. It belongs to a super-family of proteins called t-SNAREs or soluble NSF (N-ethylmaleimide-sensitive factor) attachment protein receptor. May play a protective role against hydrogen peroxide induced cytotoxicity under glutathione depleted conditions in neuronal cells by regulating the intracellular ROS levels via inhibition of p38 MAPK (MAPK11, MAPK12, MAPK13 and MAPK14). Participates in docking and fusion stage of ER to cis-Golgi transport. Plays an important physiological role in VLDL-transport vesicle-Golgi fusion and thus in VLDL delivery to the hepatic cis-Golgi. The sequence is that of Golgi SNAP receptor complex member 1 (GOSR1) from Bos taurus (Bovine).